We begin with the raw amino-acid sequence, 561 residues long: Putative periplasmic trehalase (561 aa).

Positions 1 to 30 (MKSPAPSRPQKMALIPACIFLCFAALSVQA) are cleaved as a signal peptide. Residues arginine 148, 155–156 (WD), asparagine 192, 201–203 (RSQ), 273–275 (RPE), and glycine 306 contribute to the substrate site. Active-site proton donor/acceptor residues include aspartate 308 and glutamate 492. Residue glutamate 507 participates in substrate binding. The segment at 535 to 561 (CDNVPATRPLSESTTQPVKQKEAEPTP) is disordered.

This sequence belongs to the glycosyl hydrolase 37 family. As to quaternary structure, monomer.

The protein localises to the periplasm. It carries out the reaction alpha,alpha-trehalose + H2O = alpha-D-glucose + beta-D-glucose. Provides the cells with the ability to utilize trehalose at high osmolarity by splitting it into glucose molecules that can subsequently be taken up by the phosphotransferase-mediated uptake system. The protein is Putative periplasmic trehalase of Escherichia coli O157:H7.